The following is a 339-amino-acid chain: DNA-directed RNA polymerase subunit alpha (339 aa).

The alpha N-terminal domain (alpha-NTD) stretch occupies residues 1–238; that stretch reads MVDPIVTKNW…EQLSIFINFD (238 aa). The alpha C-terminal domain (alpha-CTD) stretch occupies residues 255-339; sequence LNENLFRSVD…KAAPQGAPKV (85 aa).

The protein belongs to the RNA polymerase alpha chain family. In terms of assembly, homodimer. The RNAP catalytic core consists of 2 alpha, 1 beta, 1 beta' and 1 omega subunit. When a sigma factor is associated with the core the holoenzyme is formed, which can initiate transcription.

The catalysed reaction is RNA(n) + a ribonucleoside 5'-triphosphate = RNA(n+1) + diphosphate. DNA-dependent RNA polymerase catalyzes the transcription of DNA into RNA using the four ribonucleoside triphosphates as substrates. The polypeptide is DNA-directed RNA polymerase subunit alpha (Anaeromyxobacter sp. (strain Fw109-5)).